The chain runs to 147 residues: UPF0735 ACT domain-containing protein ABC1543 (147 aa).

One can recognise an ACT domain in the interval 70 to 145 (TFSINLADRS…SVERVELVGS (76 aa)).

The protein belongs to the UPF0735 family.

This chain is UPF0735 ACT domain-containing protein ABC1543, found in Shouchella clausii (strain KSM-K16) (Alkalihalobacillus clausii).